Consider the following 209-residue polypeptide: ATP-dependent Clp protease proteolytic subunit 2 (209 aa).

Serine 107 acts as the Nucleophile in catalysis. The active site involves histidine 132.

It belongs to the peptidase S14 family. In terms of assembly, fourteen ClpP subunits assemble into 2 heptameric rings which stack back to back to give a disk-like structure with a central cavity, resembling the structure of eukaryotic proteasomes.

The protein resides in the cytoplasm. The enzyme catalyses Hydrolysis of proteins to small peptides in the presence of ATP and magnesium. alpha-casein is the usual test substrate. In the absence of ATP, only oligopeptides shorter than five residues are hydrolyzed (such as succinyl-Leu-Tyr-|-NHMec, and Leu-Tyr-Leu-|-Tyr-Trp, in which cleavage of the -Tyr-|-Leu- and -Tyr-|-Trp bonds also occurs).. In terms of biological role, cleaves peptides in various proteins in a process that requires ATP hydrolysis. Has a chymotrypsin-like activity. Plays a major role in the degradation of misfolded proteins. This chain is ATP-dependent Clp protease proteolytic subunit 2, found in Corynebacterium jeikeium (strain K411).